Reading from the N-terminus, the 219-residue chain is Probable glutathione S-transferase MSR-1 (219 aa).

The GST N-terminal domain occupies 4–83; the sequence is NNVVLLDFSG…YIDEVWHEKC (80 aa). Residues S14, K41, I55, and 67 to 68 each bind glutathione; that span reads ES. The GST C-terminal domain maps to 89–208; the sequence is DPYQRSQARF…LPHPHKIYDF (120 aa).

It belongs to the GST superfamily. HSP26 family.

It catalyses the reaction RX + glutathione = an S-substituted glutathione + a halide anion + H(+). Functionally, may play an important role in hormonal and growth regulatory responses. The sequence is that of Probable glutathione S-transferase MSR-1 (MSR-1) from Nicotiana plumbaginifolia (Leadwort-leaved tobacco).